Here is a 330-residue protein sequence, read N- to C-terminus: tRNA U34 carboxymethyltransferase (330 aa).

Residues Lys-91, Trp-105, Lys-110, Gly-130, 152-154, 181-182, Met-196, Tyr-200, and Arg-315 each bind carboxy-S-adenosyl-L-methionine; these read DPS and IE.

It belongs to the class I-like SAM-binding methyltransferase superfamily. CmoB family. Homotetramer.

The catalysed reaction is carboxy-S-adenosyl-L-methionine + 5-hydroxyuridine(34) in tRNA = 5-carboxymethoxyuridine(34) in tRNA + S-adenosyl-L-homocysteine + H(+). Functionally, catalyzes carboxymethyl transfer from carboxy-S-adenosyl-L-methionine (Cx-SAM) to 5-hydroxyuridine (ho5U) to form 5-carboxymethoxyuridine (cmo5U) at position 34 in tRNAs. The sequence is that of tRNA U34 carboxymethyltransferase from Shewanella piezotolerans (strain WP3 / JCM 13877).